The sequence spans 252 residues: Phosphomannomutase (252 aa).

Asp13 acts as the Nucleophile in catalysis. Asp13 and Asp15 together coordinate Mg(2+). The active-site Proton donor/acceptor is Asp15. Alpha-D-mannose 1-phosphate is bound by residues Arg22, Arg124, Arg135, Arg142, Ser180, and Asp182. Asp208, Tyr220, and Thr225 together coordinate Mg(2+).

The protein belongs to the eukaryotic PMM family. Homodimer. The cofactor is Mg(2+).

The protein localises to the cytoplasm. It catalyses the reaction alpha-D-mannose 1-phosphate = D-mannose 6-phosphate. It functions in the pathway nucleotide-sugar biosynthesis; GDP-alpha-D-mannose biosynthesis; alpha-D-mannose 1-phosphate from D-fructose 6-phosphate: step 2/2. In terms of biological role, catalyzes the interconversion of mannose-6-phosphate to mannose-1-phosphate, the precursor for the synthesis of GDP-mannose. GDP-mannose is an essential sugar nucleotide for the synthesis of D-mannose-containing cell wall polysaccharides (galactomannans and glucomannans), glycolipids, glycoproteins and the antioxidant L-ascorbate. Can complement the yeast temperature-sensitive mutant sec53-6. The protein is Phosphomannomutase of Solanum lycopersicum (Tomato).